Here is a 366-residue protein sequence, read N- to C-terminus: Peptide chain release factor 2 (366 aa).

An N5-methylglutamine modification is found at glutamine 251.

This sequence belongs to the prokaryotic/mitochondrial release factor family. In terms of processing, methylated by PrmC. Methylation increases the termination efficiency of RF2.

It localises to the cytoplasm. In terms of biological role, peptide chain release factor 2 directs the termination of translation in response to the peptide chain termination codons UGA and UAA. The polypeptide is Peptide chain release factor 2 (Campylobacter lari (strain RM2100 / D67 / ATCC BAA-1060)).